Consider the following 395-residue polypeptide: Putative nickel insertion protein (395 aa).

This sequence belongs to the LarC family.

This is Putative nickel insertion protein from Roseiflexus castenholzii (strain DSM 13941 / HLO8).